A 350-amino-acid chain; its full sequence is Heat-inducible transcription repressor HrcA (350 aa).

This sequence belongs to the HrcA family.

In terms of biological role, negative regulator of class I heat shock genes (grpE-dnaK-dnaJ and groELS operons). Prevents heat-shock induction of these operons. The protein is Heat-inducible transcription repressor HrcA of Ligilactobacillus salivarius (strain UCC118) (Lactobacillus salivarius).